We begin with the raw amino-acid sequence, 424 residues long: Arogenate dehydratase 4, chloroplastic (424 aa).

A chloroplast-targeting transit peptide spans 1–34 (MQAATSCDLKFRSTDPTSRNKCFSHAIPKRVAVT). The Prephenate dehydratase domain occupies 126-303 (RVAYQGVPGA…NVTRFLMLAR (178 aa)). Residues 319 to 410 (VFAAQEHKGT…SFLRVLGSYP (92 aa)) enclose the ACT domain.

As to expression, expressed in roots, leaves, stems, flowers and siliques. More abundant in stems and roots.

Its subcellular location is the plastid. The protein resides in the chloroplast stroma. The catalysed reaction is L-arogenate + H(+) = L-phenylalanine + CO2 + H2O. It functions in the pathway amino-acid biosynthesis; L-phenylalanine biosynthesis; L-phenylalanine from L-arogenate: step 1/1. Functionally, converts the prephenate produced from the shikimate-chorismate pathway into phenylalanine. The chain is Arogenate dehydratase 4, chloroplastic from Arabidopsis thaliana (Mouse-ear cress).